A 56-amino-acid polypeptide reads, in one-letter code: Large ribosomal subunit protein bL32 (56 aa).

The protein belongs to the bacterial ribosomal protein bL32 family.

The polypeptide is Large ribosomal subunit protein bL32 (Brevibacillus brevis (strain 47 / JCM 6285 / NBRC 100599)).